Here is a 280-residue protein sequence, read N- to C-terminus: Chemotaxis protein methyltransferase 2 (280 aa).

Residues 10 to 280 form the CheR-type methyltransferase domain; sequence FGNQEFHYTR…SVGQTVYSPA (271 aa). S-adenosyl-L-methionine-binding positions include Asn85, Thr87, Arg91, Glu125, Asp150, 208–209, and 226–227; these read NL and RN.

As to quaternary structure, interacts with the C-terminal pentapeptide GWEEF of the methyl-accepting chemotaxis protein McpB.

The catalysed reaction is L-glutamyl-[protein] + S-adenosyl-L-methionine = [protein]-L-glutamate 5-O-methyl ester + S-adenosyl-L-homocysteine. Functionally, methylation of the methyl-accepting chemotaxis proteins (MCP) to form gamma-glutamyl methyl ester residues in MCP. It specifically targets the McpB chemoreceptor. This Pseudomonas aeruginosa (strain ATCC 15692 / DSM 22644 / CIP 104116 / JCM 14847 / LMG 12228 / 1C / PRS 101 / PAO1) protein is Chemotaxis protein methyltransferase 2.